Consider the following 1157-residue polypeptide: ATP-dependent helicase/deoxyribonuclease subunit B (1157 aa).

Residues 1-275 enclose the UvrD-like helicase ATP-binding domain; that stretch reads MTLHAYLGRA…QYFNQLYRFN (275 aa). Position 8–15 (8–15) interacts with ATP; sequence GRAGTGKS. Residues 269 to 583 enclose the UvrD-like helicase C-terminal domain; that stretch reads NQLYRFNNQD…SIGTMDLAKV (315 aa). Residues Cys784, Cys1112, Cys1115, and Cys1121 each coordinate [4Fe-4S] cluster.

Belongs to the helicase family. AddB/RexB type 1 subfamily. In terms of assembly, heterodimer of AddA and AddB. The cofactor is Mg(2+). Requires [4Fe-4S] cluster as cofactor.

Its function is as follows. The heterodimer acts as both an ATP-dependent DNA helicase and an ATP-dependent, dual-direction single-stranded exonuclease. Recognizes the chi site generating a DNA molecule suitable for the initiation of homologous recombination. The AddB subunit has 5' -&gt; 3' nuclease activity but not helicase activity. The sequence is that of ATP-dependent helicase/deoxyribonuclease subunit B from Staphylococcus aureus (strain JH9).